Here is a 162-residue protein sequence, read N- to C-terminus: Selenoprotein F (162 aa).

The N-terminal stretch at 1–28 (MAAEPGGWLGPALGLRLLLATALQMVSA) is a signal peptide. Position 93 (Sec93) is a non-standard amino acid, selenocysteine.

Belongs to the selenoprotein M/F family. Forms a tight complex with UGGT1/UGCGL1. Interacts with UGGT2/UGCGL2. Interacts with RDH11.

The protein resides in the endoplasmic reticulum lumen. Its function is as follows. May be involved in redox reactions associated with the formation of disulfide bonds. May contribute to the quality control of protein folding in the endoplasmic reticulum. May regulate protein folding by enhancing the catalytic activity of UGGT1/UGCGL1 and UGGT2/UGCGL2. This is Selenoprotein F from Sus scrofa (Pig).